The sequence spans 638 residues: 1-deoxy-D-xylulose-5-phosphate synthase (638 aa).

Residues His72 and 113–115 (GHA) contribute to the thiamine diphosphate site. Asp144 provides a ligand contact to Mg(2+). Residues 145–146 (GA), Asn174, Tyr287, and Glu370 contribute to the thiamine diphosphate site. Asn174 contacts Mg(2+).

This sequence belongs to the transketolase family. DXPS subfamily. Homodimer. Mg(2+) serves as cofactor. Thiamine diphosphate is required as a cofactor.

The catalysed reaction is D-glyceraldehyde 3-phosphate + pyruvate + H(+) = 1-deoxy-D-xylulose 5-phosphate + CO2. Its pathway is metabolic intermediate biosynthesis; 1-deoxy-D-xylulose 5-phosphate biosynthesis; 1-deoxy-D-xylulose 5-phosphate from D-glyceraldehyde 3-phosphate and pyruvate: step 1/1. Its function is as follows. Catalyzes the acyloin condensation reaction between C atoms 2 and 3 of pyruvate and glyceraldehyde 3-phosphate to yield 1-deoxy-D-xylulose-5-phosphate (DXP). The protein is 1-deoxy-D-xylulose-5-phosphate synthase of Thermosynechococcus vestitus (strain NIES-2133 / IAM M-273 / BP-1).